Here is a 317-residue protein sequence, read N- to C-terminus: GTPase Era (317 aa).

The Era-type G domain maps to arginine 17–glutamate 190. The G1 stretch occupies residues glycine 25–serine 32. Glycine 25 to serine 32 contributes to the GTP binding site. Residues glutamine 51–histidine 55 form a G2 region. The interval aspartate 72–glycine 75 is G3. GTP-binding positions include aspartate 72–leucine 76 and threonine 135–aspartate 138. Residues threonine 135–aspartate 138 form a G4 region. Residues valine 169–alanine 171 are G5. The KH type-2 domain maps to valine 221–lysine 303.

This sequence belongs to the TRAFAC class TrmE-Era-EngA-EngB-Septin-like GTPase superfamily. Era GTPase family. As to quaternary structure, monomer.

It is found in the cytoplasm. It localises to the cell membrane. Functionally, an essential GTPase that binds both GDP and GTP, with rapid nucleotide exchange. Plays a role in 16S rRNA processing and 30S ribosomal subunit biogenesis and possibly also in cell cycle regulation and energy metabolism. The polypeptide is GTPase Era (Streptomyces coelicolor (strain ATCC BAA-471 / A3(2) / M145)).